The chain runs to 221 residues: Thiamine-phosphate synthase (221 aa).

4-amino-2-methyl-5-(diphosphooxymethyl)pyrimidine is bound by residues 44 to 48 (QFREK) and asparagine 79. 2 residues coordinate Mg(2+): aspartate 80 and aspartate 99. Serine 117 serves as a coordination point for 4-amino-2-methyl-5-(diphosphooxymethyl)pyrimidine. 143 to 145 (TRS) contributes to the 2-[(2R,5Z)-2-carboxy-4-methylthiazol-5(2H)-ylidene]ethyl phosphate binding site. A 4-amino-2-methyl-5-(diphosphooxymethyl)pyrimidine-binding site is contributed by lysine 146. Residues glycine 175 and 195 to 196 (IS) each bind 2-[(2R,5Z)-2-carboxy-4-methylthiazol-5(2H)-ylidene]ethyl phosphate.

It belongs to the thiamine-phosphate synthase family. Mg(2+) serves as cofactor.

It carries out the reaction 2-[(2R,5Z)-2-carboxy-4-methylthiazol-5(2H)-ylidene]ethyl phosphate + 4-amino-2-methyl-5-(diphosphooxymethyl)pyrimidine + 2 H(+) = thiamine phosphate + CO2 + diphosphate. It catalyses the reaction 2-(2-carboxy-4-methylthiazol-5-yl)ethyl phosphate + 4-amino-2-methyl-5-(diphosphooxymethyl)pyrimidine + 2 H(+) = thiamine phosphate + CO2 + diphosphate. The enzyme catalyses 4-methyl-5-(2-phosphooxyethyl)-thiazole + 4-amino-2-methyl-5-(diphosphooxymethyl)pyrimidine + H(+) = thiamine phosphate + diphosphate. Its pathway is cofactor biosynthesis; thiamine diphosphate biosynthesis; thiamine phosphate from 4-amino-2-methyl-5-diphosphomethylpyrimidine and 4-methyl-5-(2-phosphoethyl)-thiazole: step 1/1. In terms of biological role, condenses 4-methyl-5-(beta-hydroxyethyl)thiazole monophosphate (THZ-P) and 2-methyl-4-amino-5-hydroxymethyl pyrimidine pyrophosphate (HMP-PP) to form thiamine monophosphate (TMP). This chain is Thiamine-phosphate synthase, found in Geobacillus thermodenitrificans (strain NG80-2).